Consider the following 364-residue polypeptide: Capsular polysaccharide phosphotransferase fcs1 (364 aa).

The protein belongs to the stealth family.

In terms of biological role, part of a group II capsule biosynthesis locus. This chain is Capsular polysaccharide phosphotransferase fcs1 (fcs1), found in Haemophilus influenzae.